The primary structure comprises 384 residues: Anhydro-N-acetylmuramic acid kinase (384 aa).

Residue 9-16 (GTSYDAID) participates in ATP binding.

It belongs to the anhydro-N-acetylmuramic acid kinase family.

The catalysed reaction is 1,6-anhydro-N-acetyl-beta-muramate + ATP + H2O = N-acetyl-D-muramate 6-phosphate + ADP + H(+). It participates in amino-sugar metabolism; 1,6-anhydro-N-acetylmuramate degradation. It functions in the pathway cell wall biogenesis; peptidoglycan recycling. In terms of biological role, catalyzes the specific phosphorylation of 1,6-anhydro-N-acetylmuramic acid (anhMurNAc) with the simultaneous cleavage of the 1,6-anhydro ring, generating MurNAc-6-P. Is required for the utilization of anhMurNAc either imported from the medium or derived from its own cell wall murein, and thus plays a role in cell wall recycling. The chain is Anhydro-N-acetylmuramic acid kinase from Streptomyces avermitilis (strain ATCC 31267 / DSM 46492 / JCM 5070 / NBRC 14893 / NCIMB 12804 / NRRL 8165 / MA-4680).